The sequence spans 276 residues: 2,3,4,5-tetrahydropyridine-2,6-dicarboxylate N-succinyltransferase (276 aa).

Substrate is bound by residues Arg100 and Asp137.

The protein belongs to the transferase hexapeptide repeat family. As to quaternary structure, homotrimer.

The protein localises to the cytoplasm. The catalysed reaction is (S)-2,3,4,5-tetrahydrodipicolinate + succinyl-CoA + H2O = (S)-2-succinylamino-6-oxoheptanedioate + CoA. It participates in amino-acid biosynthesis; L-lysine biosynthesis via DAP pathway; LL-2,6-diaminopimelate from (S)-tetrahydrodipicolinate (succinylase route): step 1/3. The polypeptide is 2,3,4,5-tetrahydropyridine-2,6-dicarboxylate N-succinyltransferase (Zymomonas mobilis subsp. mobilis (strain ATCC 31821 / ZM4 / CP4)).